The chain runs to 249 residues: Aquaporin SIP2-1 (249 aa).

The next 2 membrane-spanning stretches (helical) occupy residues 12–32 (PWLV…GALV) and 53–73 (VSLS…SGGA). The NPA 1 motif lies at 76 to 78 (NPL). Transmembrane regions (helical) follow at residues 104 to 124 (AQVI…PNVG), 133 to 155 (AHHG…VTLK), 176 to 196 (IHLL…AFAW), and 210 to 230 (LVYW…VTFF). The NPA 2 motif lies at 189–191 (NPA).

It belongs to the MIP/aquaporin (TC 1.A.8) family. SIP (TC 1.A.8.10) subfamily.

It is found in the membrane. Aquaporins facilitate the transport of water and small neutral solutes across cell membranes. In Zea mays (Maize), this protein is Aquaporin SIP2-1 (SIP2-1).